The following is a 463-amino-acid chain: MVRGKCMVCDSPNATNYHFGAQSCKACAAFFRRSIAMDQCYECLGDGVHSCKIDHTLRLNCRHCRLKKCQKAGMMRDLVQAKREIKSDKGKNSRNSSQSEDFFSPPPEQPGPSNYFDQFPWQASENEMDPYPSSPKIRKMSENLMGIDELQQFIQIPAGVDDFPDIFTDSDEIRSRMTSISEASAYVTGMEEEERLFGLAGLYTEQVINLNMRRRITYTDRLLGSVFDAPCVCPYDKADLKLFDHRTYRQKNRNDYTMILDYINRFPEFESLSKSEKTVLFRTAAAVDVLLDQSYYSQVIFPTEDVLVTANGEYLPMNPMPKVENQRDSGNFHSDEDYDRFKMLTSMKVRQWLHVCEPMKKLDMSLAEFSLFKALTIWHYNYYKLQCTGKQICSRQRDDIFRTLLLICDDEGHDSALIRASEIVLAVGIAMAEVHEMVTSYIEITVYDVLDDPILKDMLKFQY.

The nuclear receptor DNA-binding region spans Arg-3–Ala-81. 2 NR C4-type zinc fingers span residues Cys-6–Cys-27 and Cys-43–Cys-64. The tract at residues Arg-83 to Phe-119 is disordered. The 261-residue stretch at Tyr-203–Tyr-463 folds into the NR LBD domain.

The protein belongs to the nuclear hormone receptor family.

Its subcellular location is the nucleus. Orphan nuclear receptor. This is Nuclear hormone receptor family member nhr-79 (nhr-79) from Caenorhabditis elegans.